The chain runs to 637 residues: Mitochondrial Rho GTPase 1 (637 aa).

Over 1–613 (MSDGETLADV…LRRVFYLSDS (613 aa)) the chain is Cytoplasmic. The 178-residue stretch at 7 to 184 (LADVRIVLIG…FYYAQKAVIY (178 aa)) folds into the Miro 1 domain. Residues 28–35 (SLLEDEWV), 74–78 (ISEMR), and 135–138 (LPSG) contribute to the GTP site. EF-hand domains are found at residues 200-235 (RAKKALIRVFKICDRDNDGYLSDTELNDFQKLCFGI) and 320-355 (EGVQFVSALFEKYDEDKDGCLSPSELQNLFSVCSAP). Positions 213, 215, 217, 219, 224, 333, 335, 337, 339, and 344 each coordinate Ca(2+). Residues 436-601 (RKVFQCLVVG…FEQLAMMAVY (166 aa)) enclose the Miro 2 domain. GTP contacts are provided by residues 445–452 (GAKDAGKT), 482–486 (KVKEE), and 549–552 (TKVE). The chain crosses the membrane as a helical; Anchor for type IV membrane protein span at residues 614 to 634 (NLLSKITFGAAIVALAGFLVL). Residues 635 to 637 (KNL) lie on the Mitochondrial intermembrane side of the membrane.

Belongs to the mitochondrial Rho GTPase family.

Its subcellular location is the mitochondrion outer membrane. Its function is as follows. Mitochondrial GTPase involved in mitochondrial trafficking. Probably involved in control of anterograde transport of mitochondria and their subcellular distribution. The polypeptide is Mitochondrial Rho GTPase 1 (Caenorhabditis briggsae).